Here is a 117-residue protein sequence, read N- to C-terminus: Immunity protein BC_0921 (117 aa).

Probably interacts with cognate toxin BC_0920 but not with other non-cognate toxins. The interaction inhibits the toxic activity of BC_0920.

Its subcellular location is the cytoplasm. Functionally, immunity component of an LXG toxin-immunity module. Neutralizes the RNase activity of cognate toxin BC_0920. Probably does not have immunity protein activity on other toxins with the LXG domain. This is Immunity protein BC_0921 from Bacillus cereus (strain ATCC 14579 / DSM 31 / CCUG 7414 / JCM 2152 / NBRC 15305 / NCIMB 9373 / NCTC 2599 / NRRL B-3711).